Consider the following 469-residue polypeptide: MEYHQPEDPAPGKAGTAEAVIPENHEVLAGPDEHPQDTDARDADGEAREREPADQALLPSQCGDNLESPLPEASSAPPGPTLGTLPEVETIRACSMPQELPQSPRTRQPEPDFYCVKWIPWKGEQTPIITQSTNGPCPLLAIMNILFLQWKVKLPPQKEVITSDELMAHLGNCLLSIKPQEKSEGLQLNFQQNVDDAMTVLPKLATGLDVNVRFTGVSDFEYTPECSVFDLLGIPLYHGWLVDPQSPEAVRAVGKLSYNQLVERIITCKHSSDTNLVTEGLIAEQFLETTAAQLTYHGLCELTAAAKEGELSVFFRNNHFSTMTKHKSHLYLLVTDQGFLQEEQVVWESLHNVDGDSCFCDSDFHLSHSLGKGPGAEGGSGSPETQLQVDQDYLIALSLQQQQPRGPLGLTDLELAQQLQQEEYQQQQAAQPVRMRTRVLSLQGRGATSGRPAGERRQRPKHESDCILL.

The segment at 1-85 is disordered; it reads MEYHQPEDPA…APPGPTLGTL (85 aa). Over residues 23–53 the composition is skewed to basic and acidic residues; it reads ENHEVLAGPDEHPQDTDARDADGEAREREPA. Over residues 66-76 the composition is skewed to low complexity; sequence LESPLPEASSA. S103 is subject to Phosphoserine. C137 acts as the Nucleophile in catalysis. H319 functions as the Proton acceptor in the catalytic mechanism. The interval 388-426 is ubiquitin-binding domain (UBD); the sequence is QVDQDYLIALSLQQQQPRGPLGLTDLELAQQLQQEEYQQ. The residue at position 441 (S441) is a Phosphoserine. Residues 441–469 form a disordered region; sequence SLQGRGATSGRPAGERRQRPKHESDCILL. A compositionally biased stretch (basic and acidic residues) spans 453-469; it reads AGERRQRPKHESDCILL.

Belongs to the MINDY deubiquitinase family. FAM63 subfamily.

It catalyses the reaction Thiol-dependent hydrolysis of ester, thioester, amide, peptide and isopeptide bonds formed by the C-terminal Gly of ubiquitin (a 76-residue protein attached to proteins as an intracellular targeting signal).. In terms of biological role, hydrolase that can specifically remove 'Lys-48'-linked conjugated ubiquitin from proteins. Has exodeubiquitinase activity and has a preference for long polyubiquitin chains. May play a regulatory role at the level of protein turnover. The protein is Ubiquitin carboxyl-terminal hydrolase MINDY-1 of Homo sapiens (Human).